A 690-amino-acid chain; its full sequence is MEKYDEDIALQASKFLEDLSLCDGHSRLYGPVGDMLLSNDHILVADHRGRRLNGSLTQYLPHSSSDKVYPLGSSQLRSMNGSRGDGYMDEGIYKSDVALPCYSGISEKNKRYSAELYRHSCGNSFEGVPISAKQGGITALYSGGKMSNSCMSATSPRSSMASSASSSQEHSKYSSPRSSISSNALSLDKFSSPRSSLVVPGQQEKYTSPRSSLGQYEGGVLSPRSSYASTTSDTSKHSSPRASLTSYDCGSKPSSNRTSGISMGYDQRHISPRSSTASQYSCTTSPRSSYSDSRYVPSGNPDLDGVGGHGSLVSPRSSMCLQEGRSATLGSCNPSVVSPRSSISSHSSRSSRSSRGSMGAYTDLTVPSPRSSMLGTSLQEETLVQDLGEACHYKVLTQSPPRQEQHQTITSSHDLNSGAVASYNFSSAKGSATVHRFKLPYQVTPSRESGPSQAERRLEALTLELEKELELHMKKEYFGICIKCGKGVYGASQACQAMGNLYHTNCFTCCSCGRRLRGKAFYNVNGKVYCEEDFLYSGFQQTADKCFVCGHLIMEMILQALGKSYHPGCFRCVVCNECLDGVPFTVDVENNIYCVKDYHTVFAPKCASCNQPILPAQGSEETIRVVSMDKDYHVECYHCEDCQLQLNDEEGRRCYPLEGHLLCHSCHIRRLSVNVPPHQPPSYPMHVTEL.

Disordered stretches follow at residues 151-316 (MSAT…VSPR) and 328-372 (TLGS…PRSS). A compositionally biased stretch (low complexity) spans 152 to 186 (SATSPRSSMASSASSSQEHSKYSSPRSSISSNALS). Polar residues-rich tracts occupy residues 204-214 (EKYTSPRSSLG), 223-233 (PRSSYASTTSD), 240-261 (PRAS…TSGI), and 272-292 (PRSS…SYSD). The segment covering 335–357 (SVVSPRSSISSHSSRSSRSSRGS) has biased composition (low complexity). LIM zinc-binding domains are found at residues 479–540 (GICI…SGFQ), 544–603 (DKCF…TVFA), and 604–673 (PKCA…RLSV).

Belongs to the zyxin/ajuba family. As to quaternary structure, interacts with prickle3.

Its subcellular location is the cell junction. The protein resides in the adherens junction. It localises to the nucleus. Functionally, may monitor slit diaphragm protein assembly, a specialized adherens junction characteristic of podocytes. In case of podocyte injury, it shuttles into the nucleus and acts as a transcription regulator. Plays a role in the regulation of cell morphology and cytoskeletal organization. Acts as a transcriptional corepressor for snai1 and snai2/slug and plays a role in regulating neural crest development. Involved in the organization of the basal body. Involved in cilia growth and positioning. The sequence is that of Wilms tumor protein 1-interacting protein homolog (wtip) from Xenopus laevis (African clawed frog).